Consider the following 115-residue polypeptide: Thioredoxin-1 (115 aa).

In terms of domain architecture, Thioredoxin spans 2-114 (LKRCNFKNQV…RQKVLEHVSA (113 aa)). Catalysis depends on nucleophile residues C39 and C42. The cysteines at positions 39 and 42 are disulfide-linked.

Belongs to the thioredoxin family. In terms of tissue distribution, expressed in ASJ and ASI ciliated sensory neurons. Expressed in the intestine (at protein level).

Functionally, participates in various redox reactions through the reversible oxidation of its active center dithiol to a disulfide and catalyzes dithiol-disulfide exchange reactions. Shown to facilitate the reduction of insulin disulfide bonds. Might play a role in the reversible nitrosylation of cysteine residues in target proteins, and thereby contributing to the response to intracellular nitric oxide. Shapes the ASJ sensory neuron biphasic response to nitric oxide (NO) exposure; trans-nitrosylation activity might inhibit calcium flux to the cytoplasm in ASJ neurons when exposed to a NO stimulus, whereas de-nitrosylation activity might promote calcium flux when NO is diminished. By regulating the NO-induced ASJ sensory neuron activity, mediates the avoidance response to NO-producing organisms like P.aeruginosa. Positively regulates life span extension under normal and caloric restriction conditions, dauer formation and the oxidative stress response. Contributes to the down-regulation of expression of the insulin-like neuropeptide daf-28 in the ASJ neurons in a redox-independent fashion, thereby promoting dauer formation. Negatively regulates the nuclear localization of the intestinal skn-1 transcription factor in a p38 MAPK pathway-dependent and redox-independent fashion. The chain is Thioredoxin-1 (trx-1) from Caenorhabditis elegans.